The primary structure comprises 150 residues: Catabolic 3-dehydroquinase (150 aa).

The Proton acceptor role is filled by Tyr24. Substrate is bound by residues Asn75, His81, and Asp88. His101 serves as the catalytic Proton donor. Residues 102–103 (IS) and Arg112 each bind substrate.

This sequence belongs to the type-II 3-dehydroquinase family. Homododecamer. Adopts a ring-like structure, composed of an arrangement of two hexameric rings stacked on top of one another.

It carries out the reaction 3-dehydroquinate = 3-dehydroshikimate + H2O. It participates in aromatic compound metabolism; 3,4-dihydroxybenzoate biosynthesis; 3,4-dihydroxybenzoate from 3-dehydroquinate: step 1/2. In terms of biological role, is involved in the catabolism of quinate. Allows the utilization of quinate as carbon source via the beta-ketoadipate pathway. This is Catabolic 3-dehydroquinase from Verticillium alfalfae (strain VaMs.102 / ATCC MYA-4576 / FGSC 10136) (Verticillium wilt of alfalfa).